The sequence spans 320 residues: uncharacterized protein (320 aa).

As to quaternary structure, interacts with VP1054, VP39 and VP80.

The protein resides in the virion. It is found in the host nucleus. Its subcellular location is the host cytoplasm. Its function is as follows. Plays a role in nucleocapsid assembly and is essential for viral replication. Distributed over the cylindrical capsid sheath of nucleocapsid. This is an uncharacterized protein from Lepidoptera (butterflies and moths).